We begin with the raw amino-acid sequence, 161 residues long: Regulator of ribonuclease activity A (161 aa).

Belongs to the RraA family. As to quaternary structure, homotrimer. Binds to both RNA-binding sites in the C-terminal region of Rne and to RhlB.

The protein localises to the cytoplasm. Its function is as follows. Globally modulates RNA abundance by binding to RNase E (Rne) and regulating its endonucleolytic activity. Can modulate Rne action in a substrate-dependent manner by altering the composition of the degradosome. Modulates RNA-binding and helicase activities of the degradosome. The chain is Regulator of ribonuclease activity A from Sodalis glossinidius (strain morsitans).